We begin with the raw amino-acid sequence, 326 residues long: 4-hydroxythreonine-4-phosphate dehydrogenase (326 aa).

Substrate is bound by residues histidine 133 and threonine 134. Positions 163, 208, and 263 each coordinate a divalent metal cation. Substrate-binding residues include lysine 271, asparagine 280, and arginine 289.

Belongs to the PdxA family. As to quaternary structure, homodimer. It depends on Zn(2+) as a cofactor. The cofactor is Mg(2+). Requires Co(2+) as cofactor.

The protein resides in the cytoplasm. It catalyses the reaction 4-(phosphooxy)-L-threonine + NAD(+) = 3-amino-2-oxopropyl phosphate + CO2 + NADH. Its pathway is cofactor biosynthesis; pyridoxine 5'-phosphate biosynthesis; pyridoxine 5'-phosphate from D-erythrose 4-phosphate: step 4/5. In terms of biological role, catalyzes the NAD(P)-dependent oxidation of 4-(phosphooxy)-L-threonine (HTP) into 2-amino-3-oxo-4-(phosphooxy)butyric acid which spontaneously decarboxylates to form 3-amino-2-oxopropyl phosphate (AHAP). The chain is 4-hydroxythreonine-4-phosphate dehydrogenase from Pseudoalteromonas atlantica (strain T6c / ATCC BAA-1087).